A 393-amino-acid chain; its full sequence is Alpha-pyrone synthesis polyketide synthase-like Pks18 (393 aa).

The disordered stretch occupies residues 1-26; sequence MNVSAESGAPRRAGQRHEVGLAQLPP. The Nucleophile role is filled by cysteine 175. Histidine 221 is a binding site for substrate.

The protein belongs to the thiolase-like superfamily. Chalcone/stilbene synthases family. As to quaternary structure, homodimer.

The protein operates within lipid metabolism; fatty acid biosynthesis. Functionally, involved in the biosynthesis of tri- and tetraketide alpha-pyrones. Pks18 catalyzes the extension of medium- and long-chain aliphatic acyl-CoA substrates by using malonyl-CoA as an extender molecule to synthesize polyketide products. The sequence is that of Alpha-pyrone synthesis polyketide synthase-like Pks18 (pks18) from Mycobacterium bovis (strain ATCC BAA-935 / AF2122/97).